A 476-amino-acid chain; its full sequence is tRNA sulfurtransferase (476 aa).

A THUMP domain is found at 54 to 156 (AENDIPLSKV…GKDALIYDKI (103 aa)). ATP contacts are provided by residues 174–175 (MV), Lys-256, Gly-278, and Gln-287. An intrachain disulfide couples Cys-334 to Cys-433. One can recognise a Rhodanese domain in the interval 388–470 (NLEDAVFIDL…LSKQKGSVDE (83 aa)). Cys-433 serves as the catalytic Cysteine persulfide intermediate.

It belongs to the ThiI family.

The protein localises to the cytoplasm. The enzyme catalyses [ThiI sulfur-carrier protein]-S-sulfanyl-L-cysteine + a uridine in tRNA + 2 reduced [2Fe-2S]-[ferredoxin] + ATP + H(+) = [ThiI sulfur-carrier protein]-L-cysteine + a 4-thiouridine in tRNA + 2 oxidized [2Fe-2S]-[ferredoxin] + AMP + diphosphate. The catalysed reaction is [ThiS sulfur-carrier protein]-C-terminal Gly-Gly-AMP + S-sulfanyl-L-cysteinyl-[cysteine desulfurase] + AH2 = [ThiS sulfur-carrier protein]-C-terminal-Gly-aminoethanethioate + L-cysteinyl-[cysteine desulfurase] + A + AMP + 2 H(+). It functions in the pathway cofactor biosynthesis; thiamine diphosphate biosynthesis. Its function is as follows. Catalyzes the ATP-dependent transfer of a sulfur to tRNA to produce 4-thiouridine in position 8 of tRNAs, which functions as a near-UV photosensor. Also catalyzes the transfer of sulfur to the sulfur carrier protein ThiS, forming ThiS-thiocarboxylate. This is a step in the synthesis of thiazole, in the thiamine biosynthesis pathway. The sulfur is donated as persulfide by IscS. The polypeptide is tRNA sulfurtransferase (Thermoplasma volcanium (strain ATCC 51530 / DSM 4299 / JCM 9571 / NBRC 15438 / GSS1)).